Here is a 204-residue protein sequence, read N- to C-terminus: Leucyl/phenylalanyl-tRNA--protein transferase (204 aa).

This sequence belongs to the L/F-transferase family.

It localises to the cytoplasm. The enzyme catalyses N-terminal L-lysyl-[protein] + L-leucyl-tRNA(Leu) = N-terminal L-leucyl-L-lysyl-[protein] + tRNA(Leu) + H(+). It catalyses the reaction N-terminal L-arginyl-[protein] + L-leucyl-tRNA(Leu) = N-terminal L-leucyl-L-arginyl-[protein] + tRNA(Leu) + H(+). The catalysed reaction is L-phenylalanyl-tRNA(Phe) + an N-terminal L-alpha-aminoacyl-[protein] = an N-terminal L-phenylalanyl-L-alpha-aminoacyl-[protein] + tRNA(Phe). Functionally, functions in the N-end rule pathway of protein degradation where it conjugates Leu, Phe and, less efficiently, Met from aminoacyl-tRNAs to the N-termini of proteins containing an N-terminal arginine or lysine. The sequence is that of Leucyl/phenylalanyl-tRNA--protein transferase from Brucella melitensis biotype 2 (strain ATCC 23457).